The chain runs to 146 residues: Late protein OPG112 (146 aa).

A helical transmembrane segment spans residues 10 to 32; sequence LAMTAFFGELSTLDIMALIMSIF.

It belongs to the orthopoxvirus OPG112 family.

The protein localises to the host membrane. It localises to the host cytoplasm. Its function is as follows. Contributes to the formation of crescents and immature virions (IV). Interacts with phosphatidylinositol-3-phosphate (PI3P) and phosphatidylinositol-4-phosphate (PI4P) lipids in order to form virion membranes. Mechanistically, mediates proper formation of OPG125-hexamers, and hence the honey comb lattice and spherical immature virus. The sequence is that of Late protein OPG112 (OPG112) from Bos taurus (Bovine).